A 463-amino-acid chain; its full sequence is MTVRTRFAPSPTGYLHVGGARTALFSWAYARHFGGTFVLRIEDTDLERSTPEAVQAIIEGMEWLGLHHDEGPFYQMQRMDRYREVIGQMLAAGTAYHCYSSPEEVEAMRERQRAAGEKPRYDGTWRPEAGKTLPAIPEGRKPVVRFRNPTEGDVTWLDVVKGSITISNRELDDLVIARPDGTPTYNFCVAVDDSDMKITHVIRGDDHVNNTPRQINILQALGATLPHYGHLPMILGTDGEKLSKRHGAVSVMDYPAQGYLPEAMLNYLARLGWSHGDDEVFSMEQFTQWFDLDHLTKSPAQFNPEKLDWLNNHYIKQADNTRLAGLVRPMMEGLGAQFENAPDLAAVIALMKERVNTLNELAVAAMLFYRQPAADAALLAQHLTDAIRPALAQYVEQLKTVAWSKEALSATLKEVLAAHKLKMPQLAMPLRLLITGQLQTPSIDAVVELFGREVVLARLGKNL.

The short motif at 9-19 is the 'HIGH' region element; that stretch reads PSPTGYLHVGG. Positions 115 to 129 are enriched in basic and acidic residues; it reads AGEKPRYDGTWRPEA. The segment at 115–136 is disordered; that stretch reads AGEKPRYDGTWRPEAGKTLPAI. Residues 241–245 carry the 'KMSKS' region motif; sequence KLSKR. Position 244 (lysine 244) interacts with ATP.

It belongs to the class-I aminoacyl-tRNA synthetase family. Glutamate--tRNA ligase type 1 subfamily. As to quaternary structure, monomer.

The protein localises to the cytoplasm. It catalyses the reaction tRNA(Glu) + L-glutamate + ATP = L-glutamyl-tRNA(Glu) + AMP + diphosphate. Catalyzes the attachment of glutamate to tRNA(Glu) in a two-step reaction: glutamate is first activated by ATP to form Glu-AMP and then transferred to the acceptor end of tRNA(Glu). The sequence is that of Glutamate--tRNA ligase from Janthinobacterium sp. (strain Marseille) (Minibacterium massiliensis).